A 1491-amino-acid polypeptide reads, in one-letter code: MEPSVDANSITITVEGMTCISCVRTIEQQIGKVNGVHHIKVSLEEKSATIIYDPKLQTPKTLQEAIDDMGFDALLHNANPLPVLTNTVFLTVTAPLTLPWDHIQSTLLKTKGVTGVKISPQQRSAVVTIIPSVVSASQIVELVPDLSLDMGTQEKKSGACEEHSTPQAGEVMLKMKVEGMTCHSCTSTIEGKVGKLQGVQRIKVSLDNQEATIVFQPHLITAEEIKKQIEAVGFPAFIKKQPKYLKLGAIDVERLKNTPVKSSEGSQQKSPSYPSDSTTMFTIEGMHCKSCVSNIESALSTLQYVSSIVVSLENRSAIVKYNASLVTPEMLRKAIEAISPGQYRVSIASEVESTASSPSSSSLQKMPLNIVSQPLTQEAVININGMTCNSCVQSIEGVISKKPGVKSIHVSLANSTGTIEFDPLLTSPETLREAIEDMGFDAALPDMKEPLVVIAQPSLETPLLPSSNELENVMTSVQNKCYIQVSGMTCASCVANIERNLRREEGIYSVLVALMAGKAEVRYNPAVIQPRVIAEFIRELGFGAMVMENAGEGNGILELVVRGMTCASCVHKIESTLTKHKGIFYCSVALATNKAHIKYDPEIIGPRDIIHTIGSLGFEASLVKKDRSANHLDHKREIKQWRGSFLVSLFFCIPVMGLMVYMMVMDHHLATLHHNQNMSNEEMINMHSAMFLERQILPGLSIMNLLSLLLCLPVQFCGGWYFYIQAYKALKHKTANMDVLIVLATTIAFAYSLVILLVAMFERAKVNPITFFDTPPMLFVFIALGRWLEHIAKGKTSEALAKLISLQATEATIVTLNSENLLLSEEQVDVELVQRGDIIKVVPGGKFPVDGRVIEGHSMVDESLITGEAMPVAKKPGSTVIAGSINQNGSLLIRATHVGADTTLSQIVKLVEEAQTSKAPIQQFADKLSGYFVPFIVLVSIVTLLVWIIIGFQNFEIVETYFPGYNRSISRTETIIRFAFQASITVLCIACPCSLGLATPTAVMVGTGVGAQNGILIKGGEPLEMAHKVKVVVFDKTGTITHGTPVVNQVKVLVESNKISRNKILAIVGTAESNSEHPLGAAVTKYCKKELDTETLGTCTDFQVVPGCGISCKVTNIEGLLHKSNLKIEENNIKNASLVQIDAINEQSSTSSSMIIDAHLSNAVNTQQYKVLIGNREWMIRNGLVISNDVDESMIEHERRGRTAVLVTIDDELCGLIAIADTVKPEAELAVHILKSMGLEVVLMTGDNSKTARSIASQVGITKVFAEVLPSHKVAKVKQLQEEGKRVAMVGDGINDSPALAMANVGIAIGTGTDVAIEAADVVLIRNDLLDVVASIDLSRKTVKRIRINFVFALIYNLVGIPIAAGVFLPIGLVLQPWMGSAAMAASSVSVVLSSLFLKLYRKPTYDNYELHPRSHTGQRSPSEISVHVGIDDTSRNSPRLGLLDRIVNYSRASINSLLSDKRSLNSVVTSEPDKHSLLVGDFREDDDTTL.

At methionine 1 to serine 644 the chain is on the cytoplasmic side. HMA domains follow at residues asparagine 8 to leucine 74 and threonine 85 to glycine 151. Cu(+)-binding residues include threonine 18, cysteine 19, and cysteine 22. Threonine 152 is modified (phosphothreonine). An HMA 3 domain is found at valine 171 to phenylalanine 237. Cysteine 182 and cysteine 185 together coordinate Cu(+). Serine 270 is subject to Phosphoserine. The HMA 4 domain occupies serine 277 to tyrosine 343. Cu(+) contacts are provided by cysteine 288 and cysteine 291. Threonine 327 is subject to Phosphothreonine. Phosphoserine occurs at positions 339, 353, 357, and 362. 3 HMA domains span residues glutamine 377–alanine 443, asparagine 479–methionine 545, and glycine 555–serine 621. Cysteine 388, cysteine 391, cysteine 490, cysteine 493, cysteine 566, and cysteine 569 together coordinate Cu(+). A helical membrane pass occupies residues phenylalanine 645 to aspartate 666. At histidine 667–leucine 705 the chain is on the extracellular side. N-linked (GlcNAc...) asparagine glycosylation is present at asparagine 677. A helical membrane pass occupies residues leucine 706–glutamine 725. Residues alanine 726 to histidine 732 are Cytoplasmic-facing. The helical transmembrane segment at lysine 733 to leucine 753 threads the bilayer. Residues valine 754 to phenylalanine 772 are Extracellular-facing. The chain crosses the membrane as a helical span at residues aspartate 773–lysine 793. The Cytoplasmic portion of the chain corresponds to glycine 794 to aspartate 926. The helical transmembrane segment at lysine 927–isoleucine 950 threads the bilayer. Residues glycine 951–phenylalanine 980 lie on the Extracellular side of the membrane. A glycan (N-linked (GlcNAc...) asparagine) is linked at asparagine 966. Residues glutamine 981–alanine 1002 traverse the membrane as a helical segment. Residues valine 1003 to arginine 1347 are Cytoplasmic-facing. The active-site 4-aspartylphosphate intermediate is the aspartate 1035. Glutamate 1072 is an ATP binding site. Threonine 1203 carries the phosphothreonine modification. Mg(2+)-binding residues include aspartate 1292 and aspartate 1296. Residues isoleucine 1348–alanine 1365 traverse the membrane as a helical segment. The Extracellular portion of the chain corresponds to glycine 1366–glutamine 1376. The chain crosses the membrane as a helical span at residues proline 1377–leucine 1396. Over phenylalanine 1397–leucine 1491 the chain is Cytoplasmic. Phosphoserine occurs at positions 1421, 1423, 1451, 1454, and 1457. Residues leucine 1458–leucine 1459 carry the Endocytosis signal motif. Serine 1460, serine 1464, serine 1467, and serine 1477 each carry phosphoserine. Residues serine 1477 to leucine 1491 form a PDZD11-binding region. The Endocytosis signal signature appears at leucine 1478–leucine 1479.

This sequence belongs to the cation transport ATPase (P-type) (TC 3.A.3) family. Type IB subfamily. In terms of assembly, monomer. Interacts with PDZD11. Interacts with ATOX1 and COMMD1. Interacts with TYRP1. Directly interacts with SOD3; this interaction is copper-dependent and is required for SOD3 activity. As to expression, widely expressed. Highly expressed in pituitary endocrine cells. Expressed in melanocytes (at protein level). Expressed in motor neuron (at protein level). Expressed in hippocampal neuron (at protein level). In the kidney, it is detected in the proximal and distal tubules (at protein level). Expressed in aorta (at protein level).

It is found in the golgi apparatus. The protein resides in the trans-Golgi network membrane. The protein localises to the cell membrane. Its subcellular location is the melanosome membrane. It localises to the early endosome membrane. It is found in the cell projection. The protein resides in the axon. The protein localises to the dendrite. Its subcellular location is the postsynaptic density. The enzyme catalyses Cu(+)(in) + ATP + H2O = Cu(+)(out) + ADP + phosphate + H(+). In terms of biological role, ATP-driven copper (Cu(+)) ion pump that plays an important role in intracellular copper ion homeostasis. Within a catalytic cycle, acquires Cu(+) ion from donor protein on the cytoplasmic side of the membrane and delivers it to acceptor protein on the lumenal side. The transfer of Cu(+) ion across the membrane is coupled to ATP hydrolysis and is associated with a transient phosphorylation that shifts the pump conformation from inward-facing to outward-facing state. Under physiological conditions, at low cytosolic copper concentration, it is localized at the trans-Golgi network (TGN) where it transfers Cu(+) ions to cuproenzymes of the secretory pathway. Upon elevated cytosolic copper concentrations, it relocalizes to the plasma membrane where it is responsible for the export of excess Cu(+) ions. May play a dual role in neuron function and survival by regulating cooper efflux and neuronal transmission at the synapse as well as by supplying Cu(+) ions to enzymes such as PAM, TYR and SOD3. In the melanosomes of pigmented cells, provides copper cofactor to TYR to form an active TYR holoenzyme for melanin biosynthesis. The chain is Copper-transporting ATPase 1 from Mus musculus (Mouse).